Consider the following 85-residue polypeptide: Large ribosomal subunit protein bL27 (85 aa).

The tract at residues 1–21 (MAHKKAGGSTRNGRDSNAQRL) is disordered. The segment covering 9 to 19 (STRNGRDSNAQ) has biased composition (polar residues).

It belongs to the bacterial ribosomal protein bL27 family.

The chain is Large ribosomal subunit protein bL27 from Pectobacterium atrosepticum (strain SCRI 1043 / ATCC BAA-672) (Erwinia carotovora subsp. atroseptica).